The chain runs to 180 residues: MFWVISKQGSTAVAEQEETLVFRVPTEDDGKAIWNLINYPGVLDLLSSYSYFMWAKFFDQTSVVGETNEQIVGFYIGLHTTEYGPDTLFYLASCSDETQRQKGLASRMLQAILHRYAWRNIRYLEATVGTSNEAPEALFQKLSRDLKTAYHVTEFFTEDQFPGKGHEDERLFKIGPFQQV.

Positions 20–180 constitute an N-acetyltransferase domain; that stretch reads LVFRVPTEDD…LFKIGPFQQV (161 aa).

It belongs to the acetyltransferase family. EctA subfamily.

The catalysed reaction is L-2,4-diaminobutanoate + acetyl-CoA = (2S)-4-acetamido-2-aminobutanoate + CoA + H(+). The protein operates within amine and polyamine biosynthesis; ectoine biosynthesis; L-ectoine from L-aspartate 4-semialdehyde: step 2/3. Its function is as follows. Catalyzes the acetylation of L-2,4-diaminobutyrate (DABA) to gamma-N-acetyl-alpha,gamma-diaminobutyric acid (ADABA) with acetyl coenzyme A. The protein is L-2,4-diaminobutyric acid acetyltransferase (ectA) of Sporosarcina pasteurii (Bacillus pasteurii).